Reading from the N-terminus, the 608-residue chain is MSCKKWCSSSQAKWILAGSVTVTLVLAISLILGLTLHQGTQPGCENDAICGPDADMLDYLMGMGQISHRDGLLVTWYHAANSKKEMAAALNSDVMVLEADVTVEGFNTANETKVPIMAHPPAIYSDNTLQEWLEAVLASSQKGIKLDFKSLKAVGPSLDLLRQLTEAGRIRRPVWINADILRGPNVPISIEINATQFLTLVQEKYPKATISPGFTTLYVPQLPNSTYTQAMVETMQELVGALPQKVTFPVRAVMTRAAWPHFSWLLSQSERYSLTLWQGASDPVSVEDLLFIRDNSAAHQIYYDLFEPVLSQFKQLALNTTRKRTYYTGGSLIPLLQQPKGDGLEVEWLVLEVNGSGRRAAITVPDREGMILLDIGLQEPEAGNPVPILHTPGGPALTLESCLLRLAVHPRRWGIHVNIVEPEALRPSLATLAHLSTLGHLPWPVWVGSTVSHGSFVVPGHIAGRELLTAVAEVFPHVTVAPGWPEEMLDSGYQEQMVTDMLELCQGLRQPVSFQLQAGPLSQSPANTVARLLASSPRATVTVYHSTAGNSHVDLWAGLWAARAVDRTRVYYRISQEYWKDLQADVSSNRPSSRIGPSSVEGFPGESR.

The chain crosses the membrane as a helical span at residues 14-34 (WILAGSVTVTLVLAISLILGL). Residues 586-596 (VSSNRPSSRIG) are compositionally biased toward polar residues. Residues 586 to 608 (VSSNRPSSRIGPSSVEGFPGESR) form a disordered region.

The protein belongs to the menorin family.

Its subcellular location is the membrane. The protein is Protein FAM151A (Fam151a) of Mus musculus (Mouse).